The following is a 206-amino-acid chain: Large ribosomal subunit protein uL4 (206 aa).

Positions Ala-43–Ser-78 are disordered. A compositionally biased stretch (basic and acidic residues) spans Lys-49–His-58. Residues Thr-59 to Gly-70 show a composition bias toward basic residues.

This sequence belongs to the universal ribosomal protein uL4 family. As to quaternary structure, part of the 50S ribosomal subunit.

One of the primary rRNA binding proteins, this protein initially binds near the 5'-end of the 23S rRNA. It is important during the early stages of 50S assembly. It makes multiple contacts with different domains of the 23S rRNA in the assembled 50S subunit and ribosome. Functionally, forms part of the polypeptide exit tunnel. The sequence is that of Large ribosomal subunit protein uL4 from Cupriavidus metallidurans (strain ATCC 43123 / DSM 2839 / NBRC 102507 / CH34) (Ralstonia metallidurans).